A 298-amino-acid polypeptide reads, in one-letter code: Apolipoprotein E (298 aa).

The first 18 residues, 1–18 (MKVLWAALVVTLLAGCQA), serve as a signal peptide directing secretion. 6 tandem repeats follow at residues 74-95 (LLME…QELA), 96-117 (PMAE…SRLR), 118-139 (ADME…TMMG), 140-161 (QSGE…KRLL), 162-183 (RDVE…EGAE), and 223-244 (GRLE…EQME). The 8 X 22 AA approximate tandem repeats stretch occupies residues 74-244 (LLMEDTMKEV…RLEEVREQME (171 aa)). Methionine sulfoxide is present on Met137. Phosphoserine is present on Ser141. Residues 152–162 (HLRKLRKRLLR) form an LDL and other lipoprotein receptors binding region. 156-159 (LRKR) serves as a coordination point for heparin. The interval 204 to 272 (SLPSQPLRER…SWFEPMMEDM (69 aa)) is lipid-binding and lipoprotein association. 218–225 (GEQMRGRL) serves as a coordination point for heparin. Positions 260 to 272 (RFKSWFEPMMEDM) are specificity for association with VLDL.

Belongs to the apolipoprotein A1/A4/E family. As to quaternary structure, homotetramer. May interact with ABCA1; functionally associated with ABCA1 in the biogenesis of HDLs. May interact with APP/A4 amyloid-beta peptide; the interaction is extremely stable in vitro but its physiological significance is unclear. May interact with MAPT. May interact with MAP2. In the cerebrospinal fluid, interacts with secreted SORL1. Interacts with PMEL; this allows the loading of PMEL luminal fragment on ILVs to induce fibril nucleation. Post-translationally, APOE exists as multiple glycosylated and sialylated glycoforms within cells and in plasma. The extent of glycosylation and sialylation are tissue and context specific. In terms of processing, glycated in plasma VLDL. Phosphorylated by FAM20C in the extracellular medium.

It is found in the secreted. It localises to the extracellular space. The protein resides in the extracellular matrix. The protein localises to the extracellular vesicle. Its subcellular location is the endosome. It is found in the multivesicular body. Its function is as follows. APOE is an apolipoprotein, a protein associating with lipid particles, that mainly functions in lipoprotein-mediated lipid transport between organs via the plasma and interstitial fluids. APOE is a core component of plasma lipoproteins and is involved in their production, conversion and clearance. Apolipoproteins are amphipathic molecules that interact both with lipids of the lipoprotein particle core and the aqueous environment of the plasma. As such, APOE associates with chylomicrons, chylomicron remnants, very low density lipoproteins (VLDL) and intermediate density lipoproteins (IDL) but shows a preferential binding to high-density lipoproteins (HDL). It also binds a wide range of cellular receptors including the LDL receptor/LDLR, the LDL receptor-related proteins LRP1, LRP2 and LRP8 and the very low-density lipoprotein receptor/VLDLR that mediate the cellular uptake of the APOE-containing lipoprotein particles. Finally, APOE also has a heparin-binding activity and binds heparan-sulfate proteoglycans on the surface of cells, a property that supports the capture and the receptor-mediated uptake of APOE-containing lipoproteins by cells. A main function of APOE is to mediate lipoprotein clearance through the uptake of chylomicrons, VLDLs, and HDLs by hepatocytes. APOE is also involved in the biosynthesis by the liver of VLDLs as well as their uptake by peripheral tissues ensuring the delivery of triglycerides and energy storage in muscle, heart and adipose tissues. By participating in the lipoprotein-mediated distribution of lipids among tissues, APOE plays a critical role in plasma and tissues lipid homeostasis. APOE is also involved in two steps of reverse cholesterol transport, the HDLs-mediated transport of cholesterol from peripheral tissues to the liver, and thereby plays an important role in cholesterol homeostasis. First, it is functionally associated with ABCA1 in the biogenesis of HDLs in tissues. Second, it is enriched in circulating HDLs and mediates their uptake by hepatocytes. APOE also plays an important role in lipid transport in the central nervous system, regulating neuron survival and sprouting. In Dasyprocta punctata (Central American agouti), this protein is Apolipoprotein E (APOE).